A 231-amino-acid chain; its full sequence is Chlorophyll a-b binding protein 1B-20, chloroplastic (231 aa).

Positions 1–25 (RIQAYRFRTRVPPSPAASGSPRSTR) are disordered. The N-terminal 31 residues, 1 to 31 (RIQAYRFRTRVPPSPAASGSPRSTRRDVAVQ), are a transit peptide targeting the chloroplast. Trp36 is a binding site for chlorophyll b. Chlorophyll a is bound at residue Phe56. The chlorophyll b site is built by Arg80, Ser118, Glu133, and Arg136. 6 residues coordinate chlorophyll a: Lys182, Glu183, Asn186, Arg188, Gln200, and His215. The chain crosses the membrane as a helical span at residues 183–199 (ELANGRLAMLAFLGFLV).

Belongs to the light-harvesting chlorophyll a/b-binding (LHC) protein family. The LHC complex consists of chlorophyll a-b binding proteins. Requires Binds at least 14 chlorophylls (8 Chl-a and 6 Chl-b) and carotenoids such as lutein and neoxanthin. as cofactor. In terms of processing, photoregulated by reversible phosphorylation of its threonine residues.

It localises to the plastid. The protein resides in the chloroplast thylakoid membrane. In terms of biological role, the light-harvesting complex (LHC) functions as a light receptor, it captures and delivers excitation energy to photosystems with which it is closely associated. The chain is Chlorophyll a-b binding protein 1B-20, chloroplastic (LHC Ib-20) from Hordeum vulgare (Barley).